The primary structure comprises 114 residues: RNA polymerase-binding protein RbpA (114 aa).

It belongs to the RNA polymerase-binding protein RbpA family. As to quaternary structure, monomer. Forms a complex with the RNAP catalytic core, specifically with the beta subunit (RpoB); its binding site may overlap with that of Rif. May bind free principal sigma factors.

In terms of biological role, binds to RNA polymerase (RNAP), probably stimulating transcriptions from principal, but not alternative sigma factor promoters. Partially restores transcription in the presence of rifampicin (Rif) in vitro; overexpression leads to an increase in the Rif tolerance in vivo, with smaller colonies. Seems to act by removing Rif from its binding site and preventing its further binding. No longer stimulates transcription in Rif-resistant RNA polymerase (with mutations in rpoB). This chain is RNA polymerase-binding protein RbpA, found in Mycolicibacterium smegmatis (strain ATCC 700084 / mc(2)155) (Mycobacterium smegmatis).